Consider the following 114-residue polypeptide: UPF0342 protein NT01CX_2274 (114 aa).

It belongs to the UPF0342 family.

The sequence is that of UPF0342 protein NT01CX_2274 from Clostridium novyi (strain NT).